The sequence spans 115 residues: Protein V2 (115 aa).

This sequence belongs to the geminiviridae protein AV2/V2 family. In terms of assembly, interacts with host SGS3.

The protein resides in the host cytoplasm. It localises to the host perinuclear region. Functionally, through its interaction with host SGS3, acts as a suppressor of RNA-mediated gene silencing, also known as post-transcriptional gene silencing (PTGS), a mechanism of plant viral defense that limits the accumulation of viral RNAs. The polypeptide is Protein V2 (Tomato yellow leaf curl Sardinia virus (isolate Spain-2) (TYLCSV)).